The chain runs to 198 residues: Cyclotides mra4/mra5 (198 aa).

The N-terminal stretch at Met-1–Ala-22 is a signal peptide. A propeptide spanning residues Leu-23–Gly-79 is cleaved from the precursor. Intrachain disulfides connect Cys-84-Cys-100, Cys-88-Cys-102, and Cys-93-Cys-107. The propeptide occupies Ser-111–Gly-163. Cystine bridges form between Cys-167–Cys-183, Cys-171–Cys-185, and Cys-176–Cys-190. Positions Ser-194 to Asn-198 are excised as a propeptide.

The protein belongs to the cyclotide family. Bracelet subfamily. In terms of processing, these are cyclic peptides. The mature peptides contain 3 disulfide bonds each.

Its function is as follows. Probably participates in a plant defense mechanism. The polypeptide is Cyclotides mra4/mra5 (Melicytus ramiflorus (Whitey wood)).